We begin with the raw amino-acid sequence, 160 residues long: CXXC motif containing zinc binding protein (160 aa).

Cys33, Cys36, Cys67, and Cys70 together coordinate Zn(2+). Phosphoserine is present on Ser75.

Belongs to the UPF0587 family. In terms of assembly, monomer.

This Bos taurus (Bovine) protein is CXXC motif containing zinc binding protein (CZIB).